Consider the following 216-residue polypeptide: MESLYHQTNNVVKDIERDFQRLSQLSAQESLDVENGIQLKITQANANCDRLDVLLYKVPPSQRQSSKLRVDQLKYDLRHLQTSLQTARERRQRRMQEISEREQLLNHRFTANSAQPEETRLQLDYELQHHTQLGNAHRGVDDMIASGSGILESLISQRMTLGGAHKRIQAIGSTLGLSNHTMKLIERRLVEDRRIFIGGVVVTLLIIALIIYFLVL.

Residues 1–194 (MESLYHQTNN…IERRLVEDRR (194 aa)) lie on the Cytoplasmic side of the membrane. The stretch at 62–103 (QRQSSKLRVDQLKYDLRHLQTSLQTARERRQRRMQEISEREQ) forms a coiled coil. The chain crosses the membrane as a helical; Anchor for type IV membrane protein span at residues 195–215 (IFIGGVVVTLLIIALIIYFLV). Leu-216 is a topological domain (vesicular).

This sequence belongs to the GOSR2 family. As to quaternary structure, part of a unique SNARE complex.

It is found in the golgi apparatus. Its subcellular location is the cis-Golgi network membrane. The protein resides in the golgi apparatus membrane. It localises to the endoplasmic reticulum membrane. Its function is as follows. Involved in transport of proteins from the cis/medial-Golgi to the trans-Golgi network. The protein is Probable Golgi SNAP receptor complex member 2 of Drosophila melanogaster (Fruit fly).